Consider the following 358-residue polypeptide: Heat-inducible transcription repressor HrcA (358 aa).

Belongs to the HrcA family.

In terms of biological role, negative regulator of class I heat shock genes (grpE-dnaK-dnaJ and groELS operons). Prevents heat-shock induction of these operons. The chain is Heat-inducible transcription repressor HrcA from Caulobacter vibrioides (strain NA1000 / CB15N) (Caulobacter crescentus).